The sequence spans 190 residues: Vascular endothelial growth factor A (190 aa).

The N-terminal stretch at 1–26 (MNFLLSWVHWSLALLLYLHHAKWSQA) is a signal peptide. Cystine bridges form between Cys-51-Cys-93, Cys-82-Cys-127, and Cys-86-Cys-129. Asn-100 carries N-linked (GlcNAc...) asparagine glycosylation.

This sequence belongs to the PDGF/VEGF growth factor family. Homodimer; disulfide-linked. Also found as heterodimer with PGF. Interacts with NRP1. Interacts with isoform 2 of BSG. Interacts with CD82; this interaction inhibits VEGFA-mediated signaling pathway.

It localises to the secreted. Its function is as follows. Growth factor active in angiogenesis, vasculogenesis and endothelial cell growth. Induces endothelial cell proliferation, promotes cell migration, inhibits apoptosis and induces permeabilization of blood vessels. Binds to the FLT1/VEGFR1 and KDR/VEGFR2 receptors, heparan sulfate and heparin. Binding to NRP1 receptor initiates a signaling pathway needed for motor neuron axon guidance and cell body migration, including for the caudal migration of facial motor neurons from rhombomere 4 to rhombomere 6 during embryonic development. Also binds the DEAR/FBXW7-AS1 receptor. This chain is Vascular endothelial growth factor A (VEGFA), found in Equus caballus (Horse).